The chain runs to 1312 residues: DNA repair protein RAD50 (1312 aa).

ATP contacts are provided by Arg-13, Asn-36, Gly-37, Gly-39, Lys-40, Thr-41, Thr-42, Ile-65, Asp-67, and Gln-158. Thr-41 is a Mg(2+) binding site. Residue Gln-158 coordinates Mg(2+). 2 coiled-coil regions span residues 185-347 (TKAL…LIRR) and 403-558 (QDLT…LQND). Residue Ser-469 is modified to Phosphoserine. A Phosphothreonine modification is found at Thr-568. A coiled-coil region spans residues 640 to 678 (DCTIDEYNDVLEETELSYKTALENLKMHQTTLEFNRKAL). A Zinc-hook domain is found at 640–741 (DCTIDEYNDV…SLRLLEKHII (102 aa)). Zn(2+) contacts are provided by Cys-687 and Cys-690. Coiled coils occupy residues 712-741 (DANF…KHII) and 787-1108 (LAES…DIEK).

The protein belongs to the SMC family. RAD50 subfamily. As to quaternary structure, component of the MRN complex composed of two heterodimers RAD50 and MRE11 associated with a single XRS2. The MRN complexes dimerize on DNA to form joined MRN-MRN oligomers required for DNA double-strand break repair. Zn(2+) serves as cofactor.

The protein resides in the nucleus. It localises to the chromosome. It carries out the reaction ATP + H2O = ADP + phosphate + H(+). Component of the MRN complex, which plays a central role in double-strand break (DSB) repair, DNA recombination, maintenance of telomere integrity and meiosis. The MRN complex is involved in the repair of DNA double-strand breaks (DSBs) via homologous recombination (HR), an error-free mechanism which primarily occurs during S and G2 phases. The complex (1) mediates the end resection of damaged DNA, which generates proper single-stranded DNA, a key initial steps in HR, and is (2) required for the recruitment of other repair factors and efficient activation of TEL1/ATM and ATR upon DNA damage. The MRN complex possesses single-strand endonuclease activity and double-strand-specific 3'-5' exonuclease activity, which are provided by MRE11, to initiate end resection, which is required for single-strand invasion and recombination. Within the complex, RAD50 is both required to bind DNA ends and hold them in close proximity and regulate the activity of MRE11. RAD50 provides an ATP-dependent control of MRE11 by positioning DNA ends into the MRE11 active site: ATP-binding induces a large structural change from an open form with accessible MRE11 nuclease sites into a closed form. The MRN complex is also required for the processing of R-loops. The protein is DNA repair protein RAD50 of Saccharomyces cerevisiae (strain ATCC 204508 / S288c) (Baker's yeast).